The primary structure comprises 406 residues: Cysteine desulfurase (406 aa).

Lysine 226 is modified (N6-(pyridoxal phosphate)lysine). The Cysteine persulfide intermediate role is filled by cysteine 364.

It belongs to the class-V pyridoxal-phosphate-dependent aminotransferase family. Csd subfamily. As to quaternary structure, homodimer. Interacts with SufE and the SufBCD complex composed of SufB, SufC and SufD. The interaction with SufE is required to mediate the direct transfer of the sulfur atom from the S-sulfanylcysteine. Requires pyridoxal 5'-phosphate as cofactor.

Its subcellular location is the cytoplasm. It catalyses the reaction (sulfur carrier)-H + L-cysteine = (sulfur carrier)-SH + L-alanine. The enzyme catalyses L-selenocysteine + AH2 = hydrogenselenide + L-alanine + A + H(+). It participates in cofactor biosynthesis; iron-sulfur cluster biosynthesis. In terms of biological role, cysteine desulfurases mobilize the sulfur from L-cysteine to yield L-alanine, an essential step in sulfur metabolism for biosynthesis of a variety of sulfur-containing biomolecules. Component of the suf operon, which is activated and required under specific conditions such as oxidative stress and iron limitation. Acts as a potent selenocysteine lyase in vitro, that mobilizes selenium from L-selenocysteine. Selenocysteine lyase activity is however unsure in vivo. In Escherichia coli (strain K12 / MC4100 / BW2952), this protein is Cysteine desulfurase.